An 810-amino-acid chain; its full sequence is MAATKSEPLDLDLTAEEARAEYARLSDAILEADRLYYQEDAPEISDAEYDRLRRRLEDIEARFPDLAGTGAASTSVGAKPSEKFAKVRHAVPMLSLGNAFDDAEVAEFVARVRRFLGWSDDTPLAFTAEPKIDGLSLSLRYVNGRLDTAATRGDGEVGENVTANARTVQDIPAVLAGAGWPEICEVRGEVYLSHADFAAINARQEAAGKPLFANPRNAAAGSLRQLDPAITASRPLRFFAYAWGELSAPIAETQTGVLEQFATWGLPVNPRTETFTDTAAMLAHYRRIEADRAGLGYDIDGVVYKVDDLALQKRLGFVSRSPRWALAHKFAAQEATTVVEDIVINVGRTGSLNPLAKLRPVTVGGVVVSNATLHNEGYVKGVGADGEPIRDGRDIRVGDTVTVVRAGDVIPKVMDVDLTKRPADSRPYAFPESCPACGSRAVRAINPRTGRPDAVRRCTGGLICPAQGVERMKHFVSRNGFDIEGFGETYIEVLFEAGLVRQPADLFRLDFEELKAAIVARREALSAERRAESGTAEPPKKAAKKKGDEDDKAIKNLLAAVEARRAVPMNRLLFALGIPQIGEATAKALAKRFADMPTLIAAIREAAAAQPGPDWVELTAVPRVGGTTRDRLLDLGFPEDDAAPAKERARLSAVQRENLLAHYGDVDAVRAAIAQAAAQRPGDAYRVFADDGEIGPVATDALLLFFSEPHNADAVTALLDAVAVQPMERAAAASTFAGKTVVFTGALEKMTRNEAKAVAERLGAKVSGSVSAKTDLVVAGPGAGSKLKDAQKHGVRVVSEDDWLAMVAQG.

Residues 46-50, 95-96, and glutamate 129 contribute to the NAD(+) site; these read DAEYD and SL. Lysine 131 acts as the N6-AMP-lysine intermediate in catalysis. NAD(+) is bound by residues arginine 152, glutamate 189, lysine 305, and lysine 329. Residues cysteine 434, cysteine 437, cysteine 458, and cysteine 464 each contribute to the Zn(2+) site. The segment at 528–548 is disordered; sequence ERRAESGTAEPPKKAAKKKGD. Residues 731 to 810 form the BRCT domain; sequence AAASTFAGKT…DDWLAMVAQG (80 aa).

The protein belongs to the NAD-dependent DNA ligase family. LigA subfamily. Mg(2+) is required as a cofactor. It depends on Mn(2+) as a cofactor.

The enzyme catalyses NAD(+) + (deoxyribonucleotide)n-3'-hydroxyl + 5'-phospho-(deoxyribonucleotide)m = (deoxyribonucleotide)n+m + AMP + beta-nicotinamide D-nucleotide.. DNA ligase that catalyzes the formation of phosphodiester linkages between 5'-phosphoryl and 3'-hydroxyl groups in double-stranded DNA using NAD as a coenzyme and as the energy source for the reaction. It is essential for DNA replication and repair of damaged DNA. In Methylobacterium radiotolerans (strain ATCC 27329 / DSM 1819 / JCM 2831 / NBRC 15690 / NCIMB 10815 / 0-1), this protein is DNA ligase.